Reading from the N-terminus, the 876-residue chain is DNA polymerase I (876 aa).

In terms of domain architecture, 5'-3' exonuclease spans 1-310 (MKNKLVLIDG…FAIADSVTDE (310 aa)). The interval 289–876 (TDEGEKPLAG…HYGPTWYDAK (588 aa)) is subtilisin large fragment. A polymerase region spans residues 469–876 (EQDRLLTELE…HYGPTWYDAK (408 aa)).

It belongs to the DNA polymerase type-A family. As to quaternary structure, single-chain monomer with multiple functions.

The enzyme catalyses DNA(n) + a 2'-deoxyribonucleoside 5'-triphosphate = DNA(n+1) + diphosphate. Functionally, in addition to polymerase activity, the recombinant enzyme has strand displacement and 5'-3' exonuclease activity, but lacks proofreading 3'-5' exonuclease activity. This chain is DNA polymerase I (polA), found in Geobacillus stearothermophilus (Bacillus stearothermophilus).